Reading from the N-terminus, the 158-residue chain is 6,7-dimethyl-8-ribityllumazine synthase (158 aa).

5-amino-6-(D-ribitylamino)uracil contacts are provided by residues F23, 57–59 (AFE), and 81–83 (TVI). 86-87 (GT) is a binding site for (2S)-2-hydroxy-3-oxobutyl phosphate. Catalysis depends on H89, which acts as the Proton donor. A 5-amino-6-(D-ribitylamino)uracil-binding site is contributed by F114. R128 contacts (2S)-2-hydroxy-3-oxobutyl phosphate.

Belongs to the DMRL synthase family.

It catalyses the reaction (2S)-2-hydroxy-3-oxobutyl phosphate + 5-amino-6-(D-ribitylamino)uracil = 6,7-dimethyl-8-(1-D-ribityl)lumazine + phosphate + 2 H2O + H(+). Its pathway is cofactor biosynthesis; riboflavin biosynthesis; riboflavin from 2-hydroxy-3-oxobutyl phosphate and 5-amino-6-(D-ribitylamino)uracil: step 1/2. In terms of biological role, catalyzes the formation of 6,7-dimethyl-8-ribityllumazine by condensation of 5-amino-6-(D-ribitylamino)uracil with 3,4-dihydroxy-2-butanone 4-phosphate. This is the penultimate step in the biosynthesis of riboflavin. The sequence is that of 6,7-dimethyl-8-ribityllumazine synthase from Desulforudis audaxviator (strain MP104C).